We begin with the raw amino-acid sequence, 82 residues long: Large ribosomal subunit protein bL27 (82 aa).

The interval 1–26 is disordered; that stretch reads MAHKKGQGASRNGRDSESKRLGMKVG.

Belongs to the bacterial ribosomal protein bL27 family.

This Chlamydia felis (strain Fe/C-56) (Chlamydophila felis) protein is Large ribosomal subunit protein bL27.